Here is a 629-residue protein sequence, read N- to C-terminus: tRNA uridine 5-carboxymethylaminomethyl modification enzyme MnmG (629 aa).

Residues 13–18 (GGGHAG), Val-125, and Ser-180 each bind FAD. 273 to 287 (GPRYCPSIEDKVMRF) contacts NAD(+). Gln-370 provides a ligand contact to FAD.

Belongs to the MnmG family. As to quaternary structure, homodimer. Heterotetramer of two MnmE and two MnmG subunits. FAD serves as cofactor.

Its subcellular location is the cytoplasm. Its function is as follows. NAD-binding protein involved in the addition of a carboxymethylaminomethyl (cmnm) group at the wobble position (U34) of certain tRNAs, forming tRNA-cmnm(5)s(2)U34. The sequence is that of tRNA uridine 5-carboxymethylaminomethyl modification enzyme MnmG from Salmonella schwarzengrund (strain CVM19633).